A 430-amino-acid polypeptide reads, in one-letter code: MANVVVVGAQWGDEGKGKIVDWLSEQADIVVRFQGGHNAGHTLVINGQTYKLALLPSGVLRPSKLSVIGNGVVFDPQAFLDEVKKLQDQGVAISPDNLRIAENVTLILPLHRELDALRENASKATAIGTTQRGIGPAYEDKVGRRAIRLMDLADLATLPPKIDRLLAHHNALRRGFSLPEFDAGKILQELTAFAPKLLPYAETVWRLLDIKRREGKRILFEGAQGALLDVDHGTYPYVTSSNTVAAQAATGTGMGPSTVGYVLGICKAYTTRVGQGPFPTELTNEIGEEIGRRGKEFGVNTGRKRRCGWFDAVLVRQTVRTCGIHGLALTKLDILDGFDSIEVCVGYMLDGKEIDHLPAGEGAQSRVEPIYETIEGWKEPTANARSWADLPAQAIKYVRRVEELVGCPIALLSTSPEREDTILVQNPFEA.

GTP contacts are provided by residues 12-18 (GDEGKGK) and 40-42 (GHT). Residue Asp-13 is the Proton acceptor of the active site. The Mg(2+) site is built by Asp-13 and Gly-40. IMP contacts are provided by residues 13 to 16 (DEGK), 38 to 41 (NAGH), Thr-130, Arg-144, Gln-224, Thr-239, and Arg-303. His-41 acts as the Proton donor in catalysis. A substrate-binding site is contributed by 299-305 (VNTGRKR). Residues Arg-305, 331 to 333 (KLD), and 413 to 415 (STS) contribute to the GTP site.

Belongs to the adenylosuccinate synthetase family. In terms of assembly, homodimer. The cofactor is Mg(2+).

The protein resides in the cytoplasm. It catalyses the reaction IMP + L-aspartate + GTP = N(6)-(1,2-dicarboxyethyl)-AMP + GDP + phosphate + 2 H(+). It participates in purine metabolism; AMP biosynthesis via de novo pathway; AMP from IMP: step 1/2. Functionally, plays an important role in the de novo pathway of purine nucleotide biosynthesis. Catalyzes the first committed step in the biosynthesis of AMP from IMP. This is Adenylosuccinate synthetase from Rhodopseudomonas palustris (strain BisB18).